The primary structure comprises 122 residues: Large ribosomal subunit protein uL18 (122 aa).

It belongs to the universal ribosomal protein uL18 family. In terms of assembly, part of the 50S ribosomal subunit; part of the 5S rRNA/L5/L18/L25 subcomplex. Contacts the 5S and 23S rRNAs.

In terms of biological role, this is one of the proteins that bind and probably mediate the attachment of the 5S RNA into the large ribosomal subunit, where it forms part of the central protuberance. This Dictyoglomus turgidum (strain DSM 6724 / Z-1310) protein is Large ribosomal subunit protein uL18.